Consider the following 23-residue polypeptide: Benzaldehyde dehydrogenase [NAD(+)] I (23 aa).

The protein belongs to the aldehyde dehydrogenase family. As to quaternary structure, homotetramer.

The catalysed reaction is benzaldehyde + NAD(+) + H2O = benzoate + NADH + 2 H(+). This is Benzaldehyde dehydrogenase [NAD(+)] I from Acinetobacter guillouiae (Acinetobacter genomosp. 11).